A 228-amino-acid polypeptide reads, in one-letter code: Octanoyltransferase (228 aa).

The region spanning 31-212 (GETDGILILL…KFSEVFGIHF (182 aa)) is the BPL/LPL catalytic domain. Substrate is bound by residues 76–83 (RGGKITFH), 143–145 (AIG), and 156–158 (GIA). Cysteine 174 acts as the Acyl-thioester intermediate in catalysis.

It belongs to the LipB family.

Its subcellular location is the cytoplasm. The catalysed reaction is octanoyl-[ACP] + L-lysyl-[protein] = N(6)-octanoyl-L-lysyl-[protein] + holo-[ACP] + H(+). Its pathway is protein modification; protein lipoylation via endogenous pathway; protein N(6)-(lipoyl)lysine from octanoyl-[acyl-carrier-protein]: step 1/2. In terms of biological role, catalyzes the transfer of endogenously produced octanoic acid from octanoyl-acyl-carrier-protein onto the lipoyl domains of lipoate-dependent enzymes. Lipoyl-ACP can also act as a substrate although octanoyl-ACP is likely to be the physiological substrate. This Thermoanaerobacter sp. (strain X514) protein is Octanoyltransferase.